Consider the following 549-residue polypeptide: Probable glucuronosyltransferase Os01g0157700 (549 aa).

Residues 1–16 (MDSEERSKKRLRLWSR) lie on the Cytoplasmic side of the membrane. A helical; Signal-anchor for type II membrane protein membrane pass occupies residues 17–37 (AVVHFSLCFAIGVFAALLPLA). At 38-549 (ATGATSIDSI…TPEEGKTKEG (512 aa)) the chain is on the lumenal side. N-linked (GlcNAc...) asparagine glycans are attached at residues Asn-112, Asn-139, Asn-214, Asn-229, Asn-240, Asn-251, Asn-264, Asn-269, and Asn-300. The interval 232–252 (ETTWDSSSNTTQTTWDSSSNK) is disordered. The segment covering 350–363 (IEQATPEKESLTKG) has biased composition (basic and acidic residues). Disordered regions lie at residues 350-371 (IEQATPEKESLTKGDEEESHDM), 413-432 (EQETPEKENLTKGEEKESHD), and 441-524 (KIEE…KETH). Asn-421 and Asn-452 each carry an N-linked (GlcNAc...) asparagine glycan. Composition is skewed to basic and acidic residues over residues 441–465 (KIEEQETPEKENLTKGDEKESHDMM), 472–496 (KIDEQETTEKESLTKGDEKESHDMM), and 503–524 (KIEEQETPEKESLTKGDEKETH).

It belongs to the glycosyltransferase 43 family.

It is found in the golgi apparatus membrane. Involved in the synthesis of glucuronoxylan hemicellulose in secondary cell walls. In Oryza sativa subsp. japonica (Rice), this protein is Probable glucuronosyltransferase Os01g0157700.